The sequence spans 1097 residues: DNA-directed RNA polymerase subunit beta (1097 aa).

The interval 1073–1097 is disordered; the sequence is DINPRRNTPSRPTYESLGTSEYEED. Polar residues predominate over residues 1077 to 1091; sequence RRNTPSRPTYESLGT.

This sequence belongs to the RNA polymerase beta chain family. In terms of assembly, in cyanobacteria the RNAP catalytic core is composed of 2 alpha, 1 beta, 1 beta', 1 gamma and 1 omega subunit. When a sigma factor is associated with the core the holoenzyme is formed, which can initiate transcription.

The catalysed reaction is RNA(n) + a ribonucleoside 5'-triphosphate = RNA(n+1) + diphosphate. DNA-dependent RNA polymerase catalyzes the transcription of DNA into RNA using the four ribonucleoside triphosphates as substrates. The sequence is that of DNA-directed RNA polymerase subunit beta from Prochlorococcus marinus (strain MIT 9312).